We begin with the raw amino-acid sequence, 338 residues long: Ornithine carbamoyltransferase, catabolic (338 aa).

Carbamoyl phosphate contacts are provided by residues 58-61 (STRT), glutamine 85, arginine 109, and 136-139 (HPTQ). L-ornithine-binding positions include asparagine 168, aspartate 232, and 236–237 (SM). Carbamoyl phosphate-binding positions include 273–274 (CL) and arginine 318.

It belongs to the aspartate/ornithine carbamoyltransferase superfamily. OTCase family.

It localises to the cytoplasm. It carries out the reaction carbamoyl phosphate + L-ornithine = L-citrulline + phosphate + H(+). It functions in the pathway amino-acid degradation; L-arginine degradation via ADI pathway; carbamoyl phosphate from L-arginine: step 2/2. Reversibly catalyzes the transfer of the carbamoyl group from carbamoyl phosphate (CP) to the N(epsilon) atom of ornithine (ORN) to produce L-citrulline. The protein is Ornithine carbamoyltransferase, catabolic of Streptococcus pneumoniae serotype 4 (strain ATCC BAA-334 / TIGR4).